We begin with the raw amino-acid sequence, 263 residues long: MLYFIGLGLFSEDDISYKGFKALKSVDCIYAEFYTAKLMGGNIDNLIEKLDVPFITLKREDVEDANVIIKEAMTKDIAFVTAGDSLMATTHTELYVEAINKGIKTQIIHGSSIFSAAPGISGLQAYKFGKTTTVPFPDENFFPHSPYDAIKLNSQMGLHTLVLLDIQAHKDRYMTVNQALDYLSKVESERKEHVFDDDRIVIGIAQAGSKHPIVKGGRVSDVKNFDFGKPLHCIIVPANLHFIEAEALITLADVDKELLKDFL.

Residues L9, D84, M87, 112–113 (SI), L164, A207, and H232 contribute to the S-adenosyl-L-methionine site.

It belongs to the diphthine synthase family. Homodimer.

The catalysed reaction is 2-[(3S)-amino-3-carboxypropyl]-L-histidyl-[translation elongation factor 2] + 3 S-adenosyl-L-methionine = diphthine-[translation elongation factor 2] + 3 S-adenosyl-L-homocysteine + 3 H(+). It participates in protein modification; peptidyl-diphthamide biosynthesis. In terms of biological role, S-adenosyl-L-methionine-dependent methyltransferase that catalyzes the trimethylation of the amino group of the modified target histidine residue in translation elongation factor 2 (EF-2), to form an intermediate called diphthine. The three successive methylation reactions represent the second step of diphthamide biosynthesis. The protein is Diphthine synthase of Methanosphaera stadtmanae (strain ATCC 43021 / DSM 3091 / JCM 11832 / MCB-3).